Consider the following 87-residue polypeptide: Small ribosomal subunit protein bS20 (87 aa).

Positions 1–27 are disordered; that stretch reads MANIKSAKKRALQSEKRRQHNASRRSM.

Belongs to the bacterial ribosomal protein bS20 family.

Functionally, binds directly to 16S ribosomal RNA. The chain is Small ribosomal subunit protein bS20 from Aeromonas hydrophila subsp. hydrophila (strain ATCC 7966 / DSM 30187 / BCRC 13018 / CCUG 14551 / JCM 1027 / KCTC 2358 / NCIMB 9240 / NCTC 8049).